A 1166-amino-acid chain; its full sequence is Poly [ADP-ribose] polymerase tankyrase-2 (1166 aa).

ANK repeat units lie at residues 23–52 (PSAR…VNSR), 57–86 (RKST…NVQA), 90–119 (GGLI…DPNA), and 123–152 (WNYT…EPTI). N203 carries the (3S)-3-hydroxyasparagine; by HIF1AN modification. ANK repeat units follow at residues 210 to 239 (RKST…DVHA), 243 to 272 (GDLV…CVNA), 276 to 305 (WQFT…DPTL), 363 to 395 (THET…NTNE), 399 to 428 (EFLT…KVNA), 432 to 461 (LGQT…DPNI), and 463 to 489 (SLQG…SLGH). H238 carries the (3S)-3-hydroxyhistidine; by HIF1AN modification. Position 271 is a (3S)-3-hydroxyasparagine; by HIF1AN (N271). The residue at position 427 (N427) is a (3S)-3-hydroxyasparagine; by HIF1AN. (3S)-3-hydroxyasparagine; by HIF1AN is present on N518. 4 ANK repeats span residues 525-554 (RQST…DVHA), 558-587 (GGLV…VVNV), 591-620 (WKFT…DPTK), and 624-652 (DGNT…LLDA). The segment at 545–553 (LLQHGADVH) is HIF1AN-binding. (3S)-3-hydroxyhistidine; by HIF1AN is present on H553. N586 is modified ((3S)-3-hydroxyasparagine; by HIF1AN). 3 positions are modified to (3S)-3-hydroxyasparagine; by HIF1AN: N671, N706, and N739. ANK repeat units lie at residues 678 to 707 (RHST…DVNA), 711 to 740 (GGLI…CVNA), and 744 to 773 (WAFT…DPTL). An SAM domain is found at 873 to 936 (GIDFSITQFI…IKGVERLISG (64 aa)). In terms of domain architecture, PARP catalytic spans 959 to 1164 (SPDDKEFQSV…YQIVRPEGMV (206 aa)). C1081, H1084, C1089, and C1092 together coordinate Zn(2+).

This sequence belongs to the ARTD/PARP family. Oligomerizes and associates with TNKS. Interacts with the cytoplasmic domain of LNPEP/Otase in SLC2A4/GLUT4-vesicles. Binds to the N-terminus of Grb14 and TRF1 with its ankyrin repeat region. Interacts with HIF1AN. Interacts with RNF146; this interaction leads to ubiquitination and proteasomal degradation. Interacts with NUMA1. In terms of processing, ubiquitinated by RNF146 when auto-poly-ADP-ribosylated, leading to its degradation. Deubiquitinated by USP25; leading to stabilization. ADP-ribosylated (-auto). Poly-ADP-ribosylated protein is recognized by RNF146, followed by ubiquitination.

It localises to the cytoplasm. Its subcellular location is the golgi apparatus membrane. The protein localises to the nucleus. It is found in the chromosome. The protein resides in the telomere. The enzyme catalyses NAD(+) + (ADP-D-ribosyl)n-acceptor = nicotinamide + (ADP-D-ribosyl)n+1-acceptor + H(+).. It catalyses the reaction L-aspartyl-[protein] + NAD(+) = 4-O-(ADP-D-ribosyl)-L-aspartyl-[protein] + nicotinamide. It carries out the reaction L-glutamyl-[protein] + NAD(+) = 5-O-(ADP-D-ribosyl)-L-glutamyl-[protein] + nicotinamide. Functionally, poly-ADP-ribosyltransferase involved in various processes such as Wnt signaling pathway, telomere length and vesicle trafficking. Acts as an activator of the Wnt signaling pathway by mediating poly-ADP-ribosylation of AXIN1 and AXIN2, 2 key components of the beta-catenin destruction complex: poly-ADP-ribosylated target proteins are recognized by RNF146, which mediates their ubiquitination and subsequent degradation. Also mediates poly-ADP-ribosylation of BLZF1 and CASC3, followed by recruitment of RNF146 and subsequent ubiquitination. Mediates poly-ADP-ribosylation of TERF1, thereby contributing to the regulation of telomere length. Stimulates 26S proteasome activity. This Mus musculus (Mouse) protein is Poly [ADP-ribose] polymerase tankyrase-2.